The sequence spans 231 residues: 7-cyano-7-deazaguanine synthase (231 aa).

8–18 provides a ligand contact to ATP; that stretch reads LSGGLDSATAA. 4 residues coordinate Zn(2+): Cys-189, Cys-197, Cys-200, and Cys-203.

It belongs to the QueC family. The cofactor is Zn(2+).

It catalyses the reaction 7-carboxy-7-deazaguanine + NH4(+) + ATP = 7-cyano-7-deazaguanine + ADP + phosphate + H2O + H(+). It functions in the pathway purine metabolism; 7-cyano-7-deazaguanine biosynthesis. Catalyzes the ATP-dependent conversion of 7-carboxy-7-deazaguanine (CDG) to 7-cyano-7-deazaguanine (preQ(0)). This chain is 7-cyano-7-deazaguanine synthase, found in Synechococcus elongatus (strain ATCC 33912 / PCC 7942 / FACHB-805) (Anacystis nidulans R2).